A 394-amino-acid chain; its full sequence is Ribulose bisphosphate carboxylase large chain (394 aa).

Lys-5 carries the post-translational modification N6,N6,N6-trimethyllysine. Substrate is bound by residues Asn-114 and Thr-164. Residue Lys-166 is the Proton acceptor of the active site. Lys-168 serves as a coordination point for substrate. Residues Lys-192, Asp-194, and Glu-195 each coordinate Mg(2+). N6-carboxylysine is present on Lys-192. The active-site Proton acceptor is the His-285. Substrate is bound by residues Arg-286, His-318, and Ser-370.

It belongs to the RuBisCO large chain family. Type I subfamily. In terms of assembly, heterohexadecamer of 8 large chains and 8 small chains. Requires Mg(2+) as cofactor.

The protein localises to the plastid. It localises to the chloroplast. The catalysed reaction is 2 (2R)-3-phosphoglycerate + 2 H(+) = D-ribulose 1,5-bisphosphate + CO2 + H2O. It catalyses the reaction D-ribulose 1,5-bisphosphate + O2 = 2-phosphoglycolate + (2R)-3-phosphoglycerate + 2 H(+). RuBisCO catalyzes two reactions: the carboxylation of D-ribulose 1,5-bisphosphate, the primary event in carbon dioxide fixation, as well as the oxidative fragmentation of the pentose substrate in the photorespiration process. Both reactions occur simultaneously and in competition at the same active site. This is Ribulose bisphosphate carboxylase large chain (rbcL) from Nymphaea odorata (White water lily).